A 260-amino-acid chain; its full sequence is HTH-type transcriptional repressor NanR (260 aa).

The tract at residues 1–22 is disordered; it reads MNAFDSQAEDSPTSLGRSLRRR. The HTH gntR-type domain occupies 27-95; that stretch reads KKLSEMVEEE…NGERARVSRP (69 aa). The segment at residues 55 to 74 is a DNA-binding region (H-T-H motif); sequence ERELMAFFNVGRPSVREALA.

The protein belongs to the NanR family.

In terms of biological role, transcriptional repressor that controls expression of the genes required for the catabolism of sialic acids. This chain is HTH-type transcriptional repressor NanR, found in Salmonella newport (strain SL254).